The sequence spans 252 residues: Vacuolar-sorting protein dot2 (252 aa).

The protein belongs to the SNF8 family. As to quaternary structure, component of the endosomal sorting complex required for transport II (ESCRT-II).

The protein resides in the cytoplasm. The protein localises to the nucleus. It localises to the endosome membrane. In terms of biological role, component of the endosomal sorting complex required for transport II (ESCRT-II), which is required for multivesicular body (MVB) formation and sorting of endosomal cargo proteins into MVBs. The MVB pathway mediates delivery of transmembrane proteins into the lumen of the lysosome for degradation. The ESCRT-II complex is probably involved in the recruitment of the ESCRT-III complex. Negatively regulates meiotic spindle pole body maturation via indirect regulation of the pcp1 gene. Required for efficient entry into pre-meiotic S phase. The protein is Vacuolar-sorting protein dot2 (dot2) of Schizosaccharomyces pombe (strain 972 / ATCC 24843) (Fission yeast).